An 89-amino-acid polypeptide reads, in one-letter code: Cell division topological specificity factor (89 aa).

The protein belongs to the MinE family.

Functionally, prevents the cell division inhibition by proteins MinC and MinD at internal division sites while permitting inhibition at polar sites. This ensures cell division at the proper site by restricting the formation of a division septum at the midpoint of the long axis of the cell. This is Cell division topological specificity factor from Legionella pneumophila (strain Paris).